The primary structure comprises 120 residues: Ribosome-binding factor A (120 aa).

This sequence belongs to the RbfA family. In terms of assembly, monomer. Binds 30S ribosomal subunits, but not 50S ribosomal subunits or 70S ribosomes.

Its subcellular location is the cytoplasm. Its function is as follows. One of several proteins that assist in the late maturation steps of the functional core of the 30S ribosomal subunit. Associates with free 30S ribosomal subunits (but not with 30S subunits that are part of 70S ribosomes or polysomes). Required for efficient processing of 16S rRNA. May interact with the 5'-terminal helix region of 16S rRNA. This Campylobacter jejuni subsp. jejuni serotype O:6 (strain 81116 / NCTC 11828) protein is Ribosome-binding factor A.